The sequence spans 136 residues: DNA-directed RNA polymerase subunit omega (136 aa).

The protein belongs to the RNA polymerase subunit omega family. In terms of assembly, the RNAP catalytic core consists of 2 alpha, 1 beta, 1 beta' and 1 omega subunit. When a sigma factor is associated with the core the holoenzyme is formed, which can initiate transcription.

The catalysed reaction is RNA(n) + a ribonucleoside 5'-triphosphate = RNA(n+1) + diphosphate. Promotes RNA polymerase assembly. Latches the N- and C-terminal regions of the beta' subunit thereby facilitating its interaction with the beta and alpha subunits. The chain is DNA-directed RNA polymerase subunit omega from Acidiphilium cryptum (strain JF-5).